A 467-amino-acid polypeptide reads, in one-letter code: Translation initiation factor eIF2B subunit delta (467 aa).

The disordered stretch occupies residues 1–106 (MGFSAEQAKK…QNPQNSPETD (106 aa)). 4 positions are modified to phosphoserine: Ser-16, Ser-19, Ser-21, and Ser-23. Over residues 16–37 (SPVSESSSVGGTSPATASSVVS) the composition is skewed to polar residues. A Phosphothreonine modification is found at Thr-27. Phosphoserine occurs at positions 28 and 37. Positions 51–61 (LKKARKQASRR) are enriched in basic residues. A compositionally biased stretch (low complexity) spans 84–102 (PNKNSNQQKKASKQNPQNS).

The protein belongs to the eIF-2B alpha/beta/delta subunits family. In terms of assembly, component of the translation initiation factor 2B (eIF2B) complex which is a heterodecamer of two sets of five different subunits: alpha, beta, gamma, delta and epsilon. Subunits alpha, beta and delta comprise a regulatory subcomplex and subunits epsilon and gamma comprise a catalytic subcomplex. Within the complex, the hexameric regulatory complex resides at the center, with the two heterodimeric catalytic subcomplexes bound on opposite sides.

Its subcellular location is the cytoplasm. The protein localises to the cytosol. Functionally, acts as a component of the translation initiation factor 2B (eIF2B) complex, which catalyzes the exchange of GDP for GTP on the eukaryotic initiation factor 2 (eIF2) complex gamma subunit. Its guanine nucleotide exchange factor activity is repressed when bound to eIF2 complex phosphorylated on the alpha subunit, thereby limiting the amount of methionyl-initiator methionine tRNA available to the ribosome and consequently global translation is repressed. The polypeptide is Translation initiation factor eIF2B subunit delta (tif224) (Schizosaccharomyces pombe (strain 972 / ATCC 24843) (Fission yeast)).